We begin with the raw amino-acid sequence, 192 residues long: Recombination protein RecR (192 aa).

The C4-type zinc-finger motif lies at 51–66; the sequence is CQTCFHLSADPECEIC. The region spanning 74 to 168 is the Toprim domain; the sequence is GLICVVADSR…PVSRIAYGLP (95 aa).

It belongs to the RecR family.

Its function is as follows. May play a role in DNA repair. It seems to be involved in an RecBC-independent recombinational process of DNA repair. It may act with RecF and RecO. The polypeptide is Recombination protein RecR (Parasynechococcus marenigrum (strain WH8102)).